A 757-amino-acid chain; its full sequence is Transferrin receptor protein 1 (757 aa).

Over 1-67 (MMDQARSAIS…KHRRLNGRLC (67 aa)) the chain is Cytoplasmic. A mediates interaction with SH3BP4 region spans residues 1–67 (MMDQARSAIS…KHRRLNGRLC (67 aa)). Ser-10 and Ser-19 each carry phosphoserine. Position 20 is a phosphotyrosine (Tyr-20). The short motif at 20–23 (YTRF) is the Endocytosis signal element. Thr-21 is modified (phosphothreonine). Ser-24 is subject to Phosphoserine. The Stop-transfer sequence motif lies at 58 to 61 (KHRR). Cys-67 is lipidated: S-palmitoyl cysteine. The helical; Signal-anchor for type II membrane protein transmembrane segment at 68-88 (FGTIAVVIFFLIGFMIGYLGY) threads the bilayer. Residues 89–757 (CKRTEQKDCV…GDIWDIDNEF (669 aa)) are Extracellular-facing. Thr-103 carries O-linked (GalNAc...) threonine glycosylation. The PA domain maps to 220 to 310 (SKATTVSGKL…GTGDPYTPGF (91 aa)). N-linked (GlcNAc...) asparagine glycans are attached at residues Asn-248 and Asn-314. The ligand-binding stretch occupies residues 566–757 (NLDTYEKLIQ…GDIWDIDNEF (192 aa)). The Cell attachment site motif lies at 643-645 (RGD). N-linked (GlcNAc...) asparagine glycans are attached at residues Asn-719 and Asn-724.

Belongs to the peptidase M28 family. M28B subfamily. In terms of assembly, homodimer; disulfide-linked. Binds one transferrin molecule per subunit. Interacts with SH3BP4. Interacts with STEAP3; facilitates TFRC endocytosis in erythroid precursor cells. Post-translationally, stearoylated by ZDHHC6 which inhibits TFRC-mediated activation of the JNK pathway and promotes mitochondrial fragmentation. Stearoylation does not affect iron uptake. In terms of processing, N- and O-glycosylated, phosphorylated and palmitoylated.

It localises to the cell membrane. It is found in the melanosome. Its function is as follows. Cellular uptake of iron occurs via receptor-mediated endocytosis of ligand-occupied transferrin receptor into specialized endosomes. Endosomal acidification leads to iron release. The apotransferrin-receptor complex is then recycled to the cell surface with a return to neutral pH and the concomitant loss of affinity of apotransferrin for its receptor. Transferrin receptor is necessary for development of erythrocytes and the nervous system. Positively regulates T and B cell proliferation through iron uptake. Acts as a lipid sensor that regulates mitochondrial fusion by regulating activation of the JNK pathway. When dietary levels of stearate (C18:0) are low, promotes activation of the JNK pathway, resulting in HUWE1-mediated ubiquitination and subsequent degradation of the mitofusin MFN2 and inhibition of mitochondrial fusion. When dietary levels of stearate (C18:0) are high, TFRC stearoylation inhibits activation of the JNK pathway and thus degradation of the mitofusin MFN2. Mediates uptake of NICOL1 into fibroblasts where it may regulate extracellular matrix production. The protein is Transferrin receptor protein 1 (TFRC) of Cricetulus griseus (Chinese hamster).